The sequence spans 204 residues: Protein OPG030 (204 aa).

Residues 95–177 (FLRQYINNNI…ITYSELTNAI (83 aa)) enclose the BACK domain.

The protein belongs to the orthopoxvirus OPG030 family.

This Homo sapiens (Human) protein is Protein OPG030 (OPG30).